A 372-amino-acid polypeptide reads, in one-letter code: MLLKSPDKSPEKILKLFDEVYSKARIFYLLRTAIDLNLFEYLSSFKTAKELAEILDADLILMEYMLKILNELDLIESKVVSERIYYKNAEITNIYLKKDSNYSIINPIYSYFENIKNWENLADILKNKSNCSNMDVDNFFPKVVRRMADECKCWELQKVLNYMAKYEEFKNAKKLLDLAGGHGLYAIGFSMLNRNLKCYVFDLPNVIEETKKFIKKYNAKNVFTITGDFYKDDIGKGYDIIFCSYNPGGKNPKIAEKVYNALNEGGLFINKQFFPDKEEGIEDYINNMEWNFSKPEGLKKGKIRYTFEGDLNLNDYLKYLEDLGFKILEVVDMSELLGLDENSSSFRKSANPSDSLRFKDNSPAKMIVAKKL.

S-adenosyl-L-methionine contacts are provided by residues aspartate 202 and 227-229 (GDF).

The protein belongs to the class I-like SAM-binding methyltransferase superfamily. Cation-independent O-methyltransferase family.

This is an uncharacterized protein from Methanocaldococcus jannaschii (strain ATCC 43067 / DSM 2661 / JAL-1 / JCM 10045 / NBRC 100440) (Methanococcus jannaschii).